The primary structure comprises 346 residues: 4-hydroxy-2-oxovalerate aldolase (346 aa).

A Pyruvate carboxyltransferase domain is found at 8–260 (VTVHDMTLRD…ETGVDVFKIQ (253 aa)). Position 16–17 (16–17 (RD)) interacts with substrate. Asp-17 provides a ligand contact to Mn(2+). His-20 (proton acceptor) is an active-site residue. Substrate is bound by residues Ser-170 and His-199. The Mn(2+) site is built by His-199 and His-201. Substrate is bound at residue Tyr-290.

The protein belongs to the 4-hydroxy-2-oxovalerate aldolase family.

It carries out the reaction (S)-4-hydroxy-2-oxopentanoate = acetaldehyde + pyruvate. This chain is 4-hydroxy-2-oxovalerate aldolase, found in Polaromonas naphthalenivorans (strain CJ2).